Here is a 500-residue protein sequence, read N- to C-terminus: Lysine--tRNA ligase (500 aa).

E411 and E418 together coordinate Mg(2+).

This sequence belongs to the class-II aminoacyl-tRNA synthetase family. As to quaternary structure, homodimer. The cofactor is Mg(2+).

The protein localises to the cytoplasm. It carries out the reaction tRNA(Lys) + L-lysine + ATP = L-lysyl-tRNA(Lys) + AMP + diphosphate. The sequence is that of Lysine--tRNA ligase from Actinobacillus pleuropneumoniae serotype 7 (strain AP76).